A 334-amino-acid polypeptide reads, in one-letter code: D-aspartate oxidase 2 (334 aa).

FAD-binding residues include Asp-38, Lys-39, Ser-46, Gly-310, and Thr-315.

It belongs to the DAMOX/DASOX family. The cofactor is FAD. As to expression, expressed in the intestinal cells, pharyngeal muscles, and body wall muscles in adult hermaphrodites.

The protein resides in the cytoplasm. The enzyme catalyses D-aspartate + O2 + H2O = oxaloacetate + H2O2 + NH4(+). It carries out the reaction D-glutamate + O2 + H2O = H2O2 + 2-oxoglutarate + NH4(+). With respect to regulation, inhibited by thiolactomycin. In terms of biological role, selectively catalyzes the oxidative deamination of acidic amino acids. May play a role in the egg-laying events and early development of the worm, in addition to quality control of the germ cells. The sequence is that of D-aspartate oxidase 2 (ddo-2) from Caenorhabditis elegans.